The primary structure comprises 270 residues: MQCWIRQTINFFRKTKNTEKLTALLQQKEDILAVEMPVSLVYNGISHAVMMCSPNNLEDFALGFSITEGIIDKPEDIYGIDVVEVCNGIEVQIELSSRKFMALKEHRRNLTGRTGCGICGTEQLNQVYKTFPKLDCTFQFDLNLLDSCLIDLQKNQLLGCKTGATHACAFFDLYGNMLAIYEDVGRHVALDKLLGWHAKSGKPRGFILASSRASYEMVQKTVACGVEMLVTISAATDLAVTMAEKHNLTLIGFAREGKGNIYSGHQRLHN.

The active-site Cysteine persulfide intermediate is C116. 253–258 (FAREGK) is a binding site for Mo-bis(molybdopterin guanine dinucleotide).

Belongs to the FdhD family.

Its subcellular location is the cytoplasm. Required for formate dehydrogenase (FDH) activity. Acts as a sulfur carrier protein that transfers sulfur from IscS to the molybdenum cofactor prior to its insertion into FDH. This Haemophilus influenzae (strain 86-028NP) protein is Sulfur carrier protein FdhD.